The following is a 389-amino-acid chain: Aspartic protease 6 (389 aa).

The signal sequence occupies residues 1 to 15; the sequence is MKTFILLAVLGLASA. A Peptidase A1 domain is found at 71–384; it reads YLGNITIGTP…DIGNKRMGFA (314 aa). Asparagine 74 carries N-linked (GlcNAc...) asparagine glycosylation. Aspartate 89 is a catalytic residue. Cysteine 102 and cysteine 106 are disulfide-bonded. Aspartate 277 is an active-site residue. An intrachain disulfide couples cysteine 312 to cysteine 344.

This sequence belongs to the peptidase A1 family. In terms of processing, glycosylated. Has phosphorylcholine-substituted oligosaccharide N-glycans. In terms of tissue distribution, expressed in intestine, muscles, pharynx and hypodermis.

It localises to the secreted. Its function is as follows. Aspartic protease. The polypeptide is Aspartic protease 6 (Caenorhabditis elegans).